The chain runs to 118 residues: Class I hydrophobin 1 (118 aa).

A signal peptide spans 1-20; it reads MFARLSTALLAFTLATAVVA. 4 disulfides stabilise this stretch: Cys34–Cys97, Cys41–Cys91, Cys42–Cys77, and Cys98–Cys111. Residue Asn54 is glycosylated (N-linked (GlcNAc...) asparagine). Asn115 carries an N-linked (GlcNAc...) asparagine glycan.

The protein belongs to the fungal hydrophobin family. As to quaternary structure, self-assembles to form functional amyloid fibrils called rodlets. Self-assembly into fibrillar rodlets occurs spontaneously at hydrophobic:hydrophilic interfaces and the rodlets further associate laterally to form amphipathic monolayers.

It localises to the secreted. It is found in the cell wall. In terms of biological role, aerial growth, conidiation, and dispersal of filamentous fungi in the environment rely upon a capability of their secreting small amphipathic proteins called hydrophobins (HPBs) with low sequence identity. Class I can self-assemble into an outermost layer of rodlet bundles on aerial cell surfaces, conferring cellular hydrophobicity that supports fungal growth, development and dispersal; whereas Class II form highly ordered films at water-air interfaces through intermolecular interactions but contribute nothing to the rodlet structure. This Coprinopsis cinerea (strain Okayama-7 / 130 / ATCC MYA-4618 / FGSC 9003) (Inky cap fungus) protein is Class I hydrophobin 1.